Reading from the N-terminus, the 249-residue chain is Sugar fermentation stimulation protein homolog (249 aa).

Belongs to the SfsA family.

The polypeptide is Sugar fermentation stimulation protein homolog (Synechococcus sp. (strain CC9902)).